A 472-amino-acid chain; its full sequence is MVLNENDKEFVKKLFDSLDKDNNGKLTREEIKEGFFKLRIPSSEKDIESFLTNVDKDKDGSVSFKEFEDFTIENIKKLKIVFEELDTNKSGTLDIHEIEESIKKLNIPLYSEQELIRLFHRIDKNRDNQIDFNEWRELLVLLPNSNLQLIISFWKDSQILDAGFDNGGFIPPMVEKKEKASSLRNTITYMLAGSVAGFASRTSTAPLERVKIMCQLNHGKPISLISAFKACYKDGGIKGFFRGNLANIIKVSPESAVKFGTYEYVKKLFAENDCELTSAQRFISGSVAGVVSHTTLFPLEVVRLRLSAEIAGTYNGIFDCFKKIAISEKSIRPFYRGLGASITATIPHSGVNMMVYEFLKHKVIKMTGNEFPTAGQLLVCASTSSVCGQLVGYPFHVVKSRLITQGSSVNQEKYTGLFDGLTKIIKKEGPIGLYKGIVPSFMKSIPSHSITFIVYEGFKKAFDVNLKEKKHH.

Topologically, residues 1–189 are mitochondrial intermembrane; sequence MVLNENDKEF…ASSLRNTITY (189 aa). EF-hand domains are found at residues 6–41, 42–70, 73–108, and 110–145; these read NDKE…LRIP, SSEK…FEDF, ENIK…LNIP, and YSEQ…LPNS. Positions 19, 21, 23, 25, 30, 55, 57, 59, 61, 66, 86, 88, 90, 92, 97, 123, 125, 127, 129, and 134 each coordinate Ca(2+). Solcar repeat units follow at residues 184–268, 276–362, and 375–461; these read RNTI…VKKL, LTSA…LKHK, and GQLL…FKKA. A helical transmembrane segment spans residues 190 to 207; that stretch reads MLAGSVAGFASRTSTAPL. Over 208–242 the chain is Mitochondrial matrix; the sequence is ERVKIMCQLNHGKPISLISAFKACYKDGGIKGFFR. Residues 243–263 form a helical membrane-spanning segment; sequence GNLANIIKVSPESAVKFGTYE. Over 264 to 281 the chain is Mitochondrial intermembrane; the sequence is YVKKLFAENDCELTSAQR. A helical membrane pass occupies residues 282 to 302; the sequence is FISGSVAGVVSHTTLFPLEVV. Residues 303 to 330 lie on the Mitochondrial matrix side of the membrane; sequence RLRLSAEIAGTYNGIFDCFKKIAISEKS. Residues 331–351 form a helical membrane-spanning segment; sequence IRPFYRGLGASITATIPHSGV. Over 352–377 the chain is Mitochondrial intermembrane; it reads NMMVYEFLKHKVIKMTGNEFPTAGQL. The helical transmembrane segment at 378-398 threads the bilayer; the sequence is LVCASTSSVCGQLVGYPFHVV. Over 399-441 the chain is Mitochondrial matrix; sequence KSRLITQGSSVNQEKYTGLFDGLTKIIKKEGPIGLYKGIVPSF. The helical transmembrane segment at 442-462 threads the bilayer; sequence MKSIPSHSITFIVYEGFKKAF. The Mitochondrial intermembrane portion of the chain corresponds to 463-472; that stretch reads DVNLKEKKHH.

The protein belongs to the mitochondrial carrier (TC 2.A.29) family.

It localises to the mitochondrion inner membrane. Functionally, calcium-dependent mitochondrial solute carrier. Mitochondrial solute carriers shuttle metabolites, nucleotides, and cofactors through the mitochondrial inner membrane. This Dictyostelium discoideum (Social amoeba) protein is Mitochondrial substrate carrier family protein C (mcfC).